We begin with the raw amino-acid sequence, 1170 residues long: MLEGPILAVSRQTSSVAGIPGASTRYSFAKIDAPIEVPGLLDLQRESFAWLVGAPEWRARMQAEAGEGVRVTSGLEDILEELSPIEDYSENMSLTLSEPRFDDMKTSIDEAKEKDINYAAPLYVTAEFTNAQSGEIKSQTVFIGDFPMMTDKGTFIINGTERVVVSQLVRSPGVYFDESIDTSTERPLHGVKVIPSRGAWLEFDVDKRDTVGVRIDRKRRQPVTVLLKALGLTTQEITDRFGFSEIMMSTLEKDGVENTDEALLEIYRKQRPGESPTRDSAQALLENSFFRPKRYDLAKVGRYKVNRKLGLGGDTDGTMTLTEEDILTTIEYLVRLHAGERTMTSPEGVEIPIEVDDIDHFGNRRLRTVGELIQNQVRVGLSRMERVVRERMTTQDAESITPTSLINVRPVSAAIREFFGTSQLSQFMDQNNSLSGLTHKRRLNALGPGGLSRERAGLEVRDVHPSHYGRMCPIETPEGPNIGLIGSLSSYARVNPFGFIETPYRRVVDGQITDEVEYFTADEEDRHVIAQANTPFDADMKFTEDQIEVRLRGGDVEVVPASQVDYMDVSPRQMVSVATAMIPFLEHDDANRALMGANMQRQAVPLLRAEAPYVGTGIEQRAAYDAGDLIIAPKAGVVEYVSADYITIMDDEGIRDTFMLRKFERTNQGTSYNQKPLVNQGDRVEAGQVIADGPGTDNGEMALGKNLLVAFMPWEGHNYEDAIILSQRMVEEDVLTSIHIEEYEIDARDTKLGPEEITRDIPNVGEDVLADLDERGIVRIGADVRDGDILVGKVTPKGETELTPEERLLRAIFGEKAREVRDTSMKVPHGETGKVIGVRVFSREDDDDLAAGVNEMVRVYVAQKRKIQDGDKLAGRHGNKGVVGKILPQEDMPFLPDGTPVDIILNTHGVPRRMNIGQVLEVHLGWLAKAGWQVDTNSDDPKIKAMLETLPEDLYDVPADSLTSTPVFDGASNAELSGLLRSSRPDRDGIRLVDDFGKAQLIDGRTGEPYEHPISVGYMYMLKLHHLVDEKIHARSTGPYSMITQQPLGGKAQFGGQRFGEMEVWAMQAYGAAYTLQELLTIKSDDVVGRVKVYEAIVKGENIPDPGIPESFKVLLKELQSLCLNVEVLAADGTPMELSSDDDDELESANAALGINLQRDERPDADIDVG.

The protein belongs to the RNA polymerase beta chain family. The RNAP catalytic core consists of 2 alpha, 1 beta, 1 beta' and 1 omega subunit. When a sigma factor is associated with the core the holoenzyme is formed, which can initiate transcription.

The catalysed reaction is RNA(n) + a ribonucleoside 5'-triphosphate = RNA(n+1) + diphosphate. In terms of biological role, DNA-dependent RNA polymerase catalyzes the transcription of DNA into RNA using the four ribonucleoside triphosphates as substrates. The polypeptide is DNA-directed RNA polymerase subunit beta (Corynebacterium urealyticum (strain ATCC 43042 / DSM 7109)).